Consider the following 218-residue polypeptide: Histone H1 (218 aa).

Composition is skewed to low complexity over residues 1-19 (MSETAPVAAPAVSAPGAKA) and 27-39 (AAGGSKARKPAGP). Disordered stretches follow at residues 1 to 41 (MSET…GPSV) and 89 to 218 (VGKG…PKKK). The residue at position 2 (Ser-2) is an N-acetylserine. In terms of domain architecture, H15 spans 37 to 110 (AGPSVTELIT…GASGSFKLNK (74 aa)). Composition is skewed to basic residues over residues 119–133 (ATKKKPAAKPKKPAA), 141–158 (KKPKKAAAVKKSPKKAKK), 166–184 (KAAKSPKKAAKAGRPKKAA), and 191–218 (KAVKPKAAKPKAAKPKAAKAKKAAPKKK).

The protein belongs to the histone H1/H5 family.

The protein resides in the nucleus. The protein localises to the chromosome. In terms of biological role, histones H1 are necessary for the condensation of nucleosome chains into higher-order structures. This Anas platyrhynchos (Mallard) protein is Histone H1.